Here is a 37-residue protein sequence, read N- to C-terminus: Large ribosomal subunit protein bL36 (37 aa).

It belongs to the bacterial ribosomal protein bL36 family.

The chain is Large ribosomal subunit protein bL36 from Tropheryma whipplei (strain Twist) (Whipple's bacillus).